The primary structure comprises 715 residues: Polyribonucleotide nucleotidyltransferase (715 aa).

2 residues coordinate Mg(2+): Asp-488 and Asp-494. In terms of domain architecture, KH spans 555 to 614 (PKIETIKIPVDKIREVIGSGGKVIREIVEKTGAKIDIGEDGTIKIAAAEQTKIDAAKEWI). The 69-residue stretch at 624-692 (GQIYTGKVVK…DRGKTRLSMK (69 aa)) folds into the S1 motif domain. The disordered stretch occupies residues 692–715 (KVVDQETGEDLSKSNEKAEEPADA). The span at 701–715 (DLSKSNEKAEEPADA) shows a compositional bias: basic and acidic residues.

This sequence belongs to the polyribonucleotide nucleotidyltransferase family. It depends on Mg(2+) as a cofactor.

It is found in the cytoplasm. The enzyme catalyses RNA(n+1) + phosphate = RNA(n) + a ribonucleoside 5'-diphosphate. Its function is as follows. Involved in mRNA degradation. Catalyzes the phosphorolysis of single-stranded polyribonucleotides processively in the 3'- to 5'-direction. The protein is Polyribonucleotide nucleotidyltransferase of Phenylobacterium zucineum (strain HLK1).